The following is a 297-amino-acid chain: Phenylalanine-4-hydroxylase (297 aa).

His138, His143, and Glu184 together coordinate Fe cation.

The protein belongs to the biopterin-dependent aromatic amino acid hydroxylase family. As to quaternary structure, monomer. It depends on Fe(2+) as a cofactor.

The enzyme catalyses (6R)-L-erythro-5,6,7,8-tetrahydrobiopterin + L-phenylalanine + O2 = (4aS,6R)-4a-hydroxy-L-erythro-5,6,7,8-tetrahydrobiopterin + L-tyrosine. It functions in the pathway amino-acid degradation; L-phenylalanine degradation; acetoacetate and fumarate from L-phenylalanine: step 1/6. This chain is Phenylalanine-4-hydroxylase (phhA), found in Chromobacterium violaceum (strain ATCC 12472 / DSM 30191 / JCM 1249 / CCUG 213 / NBRC 12614 / NCIMB 9131 / NCTC 9757 / MK).